A 125-amino-acid chain; its full sequence is uncharacterized protein (125 aa).

4 helical membrane passes run 9-29 (IANAGALAVAVWLLDKITLTG), 33-53 (GEKTLTLIVVALVFGLVNMVV), 56-76 (IVQVLTFPLFILTLGLFTLVV), and 100-120 (FWTAVLGGLIVSIVSWALNAF).

The protein localises to the cell membrane. This is an uncharacterized protein from Streptomyces coelicolor (strain ATCC BAA-471 / A3(2) / M145).